We begin with the raw amino-acid sequence, 332 residues long: MKVAVLGAGAWGTALAGHLAARHDTLLWARDAALIAGLQARHENSRYLDGIALPDALRYDADLGAALAHGAADDALCVIAAPVAGLRTLFGAMRDAGCVPAHVVWVCKGFEADTHLLPHQVIAAELPGQHSNGVLSGPSFAREVGLALPVALTVASTSAECRERTLAAFHHGAMRIYTGDDVVGVEVGGAVKNVLAIATGIADGLGLGLNARAALVTRGLAEMSRLGVALGGRAETFTGLTGLGDLILTATGDLSRNRTVGLQLAAGRSLNDILGALGHVAEGVRCAQAVLALARAQSIEMPITEAVCGVLFDGVAPRDAVSGLLRRDARAE.

NADPH is bound by residues W11, R30, and K108. Positions 108, 137, and 139 each coordinate sn-glycerol 3-phosphate. Position 141 (A141) interacts with NADPH. Positions 192, 245, 255, 256, and 257 each coordinate sn-glycerol 3-phosphate. The Proton acceptor role is filled by K192. NADPH is bound at residue R256. V280 and E282 together coordinate NADPH.

This sequence belongs to the NAD-dependent glycerol-3-phosphate dehydrogenase family.

Its subcellular location is the cytoplasm. It carries out the reaction sn-glycerol 3-phosphate + NAD(+) = dihydroxyacetone phosphate + NADH + H(+). It catalyses the reaction sn-glycerol 3-phosphate + NADP(+) = dihydroxyacetone phosphate + NADPH + H(+). It participates in membrane lipid metabolism; glycerophospholipid metabolism. In terms of biological role, catalyzes the reduction of the glycolytic intermediate dihydroxyacetone phosphate (DHAP) to sn-glycerol 3-phosphate (G3P), the key precursor for phospholipid synthesis. The sequence is that of Glycerol-3-phosphate dehydrogenase [NAD(P)+] from Burkholderia ambifaria (strain MC40-6).